We begin with the raw amino-acid sequence, 550 residues long: Lariat debranching enzyme (550 aa).

Residues Cys8 and His10 each coordinate a divalent metal cation. Residue Ser28 is modified to Phosphoserine. A divalent metal cation contacts are provided by Asp39 and Asn84. Positions 124–154 (SGIFKSHDYRKGHFECPPYNSSTIRSIYHVR) are lariat recognition loop. Lys128 carries the N6-acetyllysine modification. Residues His174, His226, and His228 each coordinate a divalent metal cation. The interval 390-550 (EHHQCGEYEQ…AVDDGDASAE (161 aa)) is disordered. Polar residues predominate over residues 416-426 (NTDTSALSSIN). Acidic residues predominate over residues 430–445 (IMLDEEEEEEEEEEEA). Residues 450 to 483 (SDMNTPSVEPASDQASDLSTSFSDIRNLPSSMFV) show a composition bias toward polar residues. Phosphoserine is present on residues Ser470, Ser480, Ser484, Ser485, Ser489, Ser491, Ser494, Ser505, and Ser520. Residues 498 to 528 (KCGETVESGDEKDLAKFPLKRLSDEHEPEQR) are compositionally biased toward basic and acidic residues.

The protein belongs to the lariat debranching enzyme family. The cofactor is Fe(2+). Requires Zn(2+) as cofactor. Mn(2+) is required as a cofactor.

It localises to the nucleus. With respect to regulation, active in presence of diverse metals including Fe(2+), Zn(2+), Mn(2+). Also activated by Ca(2+). Binds two metal cations in two adjacent alpha and beta metal-binding pockets. Functionally, cleaves the 2'-5' phosphodiester linkage at the branch point of excised lariat intron RNA and converts them into linear molecules that can be subsequently degraded, thereby facilitating ribonucleotide turnover. Linked to its role in pre-mRNA processing mechanism, may also participate in retrovirus replication and have an antiviral cell-intrinsic defense function. This chain is Lariat debranching enzyme (Dbr1), found in Mus musculus (Mouse).